A 582-amino-acid polypeptide reads, in one-letter code: ATP-dependent lipid A-core flippase (582 aa).

Transmembrane regions (helical) follow at residues 25-45 (AGLI…TFML), 69-89 (LAVI…SYCI), 137-159 (ASSS…LFIM), 253-273 (PIIQ…ASFP), and 275-295 (VMET…IALM). Residues 28 to 310 (IVAAIALILN…LTNVNTQFQR (283 aa)) form the ABC transmembrane type-1 domain. In terms of domain architecture, ABC transporter spans 342–578 (IEFRHVTFYY…QGVYAQLNRM (237 aa)). 376 to 383 (GRSGSGKS) contacts ATP.

This sequence belongs to the ABC transporter superfamily. Lipid exporter (TC 3.A.1.106) family. Homodimer.

The protein resides in the cell inner membrane. It catalyses the reaction ATP + H2O + lipid A-core oligosaccharideSide 1 = ADP + phosphate + lipid A-core oligosaccharideSide 2.. Functionally, involved in lipopolysaccharide (LPS) biosynthesis. Translocates lipid A-core from the inner to the outer leaflet of the inner membrane. Transmembrane domains (TMD) form a pore in the inner membrane and the ATP-binding domain (NBD) is responsible for energy generation. The chain is ATP-dependent lipid A-core flippase from Yersinia pestis bv. Antiqua (strain Antiqua).